A 25-amino-acid polypeptide reads, in one-letter code: Aurein-5.1 (25 aa).

This sequence belongs to the frog skin active peptide (FSAP) family. Aurein subfamily. In terms of tissue distribution, expressed by the skin dorsal glands.

Its subcellular location is the secreted. Has no antimicrobial or anticancer activity. The chain is Aurein-5.1 from Ranoidea aurea (Green and golden bell frog).